A 212-amino-acid polypeptide reads, in one-letter code: Cell division protein SepF (212 aa).

The interval R32–E104 is disordered. Residues E64–G73 show a composition bias toward acidic residues.

Belongs to the SepF family. In terms of assembly, homodimer. Interacts with FtsZ.

The protein localises to the cytoplasm. Its function is as follows. Cell division protein that is part of the divisome complex and is recruited early to the Z-ring. Probably stimulates Z-ring formation, perhaps through the cross-linking of FtsZ protofilaments. Its function overlaps with FtsA. The protein is Cell division protein SepF of Saccharopolyspora erythraea (strain ATCC 11635 / DSM 40517 / JCM 4748 / NBRC 13426 / NCIMB 8594 / NRRL 2338).